A 197-amino-acid chain; its full sequence is dITP/XTP pyrophosphatase (197 aa).

8 to 13 is a binding site for substrate; the sequence is TGNAGK. Mg(2+)-binding residues include E40 and D69. The active-site Proton acceptor is the D69. Residues S70, 154-157, K177, and 182-183 each bind substrate; these read FGYD and HR.

It belongs to the HAM1 NTPase family. In terms of assembly, homodimer. Requires Mg(2+) as cofactor.

The catalysed reaction is XTP + H2O = XMP + diphosphate + H(+). The enzyme catalyses dITP + H2O = dIMP + diphosphate + H(+). It catalyses the reaction ITP + H2O = IMP + diphosphate + H(+). In terms of biological role, pyrophosphatase that catalyzes the hydrolysis of nucleoside triphosphates to their monophosphate derivatives, with a high preference for the non-canonical purine nucleotides XTP (xanthosine triphosphate), dITP (deoxyinosine triphosphate) and ITP. Seems to function as a house-cleaning enzyme that removes non-canonical purine nucleotides from the nucleotide pool, thus preventing their incorporation into DNA/RNA and avoiding chromosomal lesions. This Escherichia coli O157:H7 protein is dITP/XTP pyrophosphatase (rdgB).